Reading from the N-terminus, the 495-residue chain is Phosphomethylpyrimidine synthase (495 aa).

Substrate is bound by residues Asn125, Met154, Tyr183, His219, 239–241 (SRG), 280–283 (DGLR), and Glu319. His323 is a binding site for Zn(2+). Tyr346 is a binding site for substrate. His387 is a binding site for Zn(2+). The [4Fe-4S] cluster site is built by Cys467, Cys470, and Cys475.

It belongs to the ThiC family. It depends on [4Fe-4S] cluster as a cofactor.

The catalysed reaction is 5-amino-1-(5-phospho-beta-D-ribosyl)imidazole + S-adenosyl-L-methionine = 4-amino-2-methyl-5-(phosphooxymethyl)pyrimidine + CO + 5'-deoxyadenosine + formate + L-methionine + 3 H(+). Its pathway is cofactor biosynthesis; thiamine diphosphate biosynthesis. Functionally, catalyzes the synthesis of the hydroxymethylpyrimidine phosphate (HMP-P) moiety of thiamine from aminoimidazole ribotide (AIR) in a radical S-adenosyl-L-methionine (SAM)-dependent reaction. This is Phosphomethylpyrimidine synthase from Leptospira interrogans serogroup Icterohaemorrhagiae serovar Lai (strain 56601).